The following is a 905-amino-acid chain: uncharacterized protein (905 aa).

4 WD repeats span residues 42-82 (RSLK…FQAV), 86-128 (GYAR…SDPK), 136-175 (STLDGVSSVCYKKDTPLLLTGSTSRSVHIIDTRQQLDSVS), and 177-217 (VNTQ…SDNY). Phosphoserine occurs at positions 394 and 397.

The protein belongs to the WD repeat mio family.

This is an uncharacterized protein from Schizosaccharomyces pombe (strain 972 / ATCC 24843) (Fission yeast).